Consider the following 101-residue polypeptide: Small ribosomal subunit protein uS10 (101 aa).

The protein belongs to the universal ribosomal protein uS10 family. Part of the 30S ribosomal subunit.

In terms of biological role, involved in the binding of tRNA to the ribosomes. The polypeptide is Small ribosomal subunit protein uS10 (Brachyspira pilosicoli (Serpulina pilosicoli)).